The primary structure comprises 359 residues: Chorismate synthase (359 aa).

NADP(+) contacts are provided by Arg-48 and Arg-54. Residues 129-131, 241-242, Gly-285, 300-304, and Arg-326 each bind FMN; these read RSS, NA, and KPTSS.

This sequence belongs to the chorismate synthase family. Homotetramer. FMNH2 is required as a cofactor.

It carries out the reaction 5-O-(1-carboxyvinyl)-3-phosphoshikimate = chorismate + phosphate. Its pathway is metabolic intermediate biosynthesis; chorismate biosynthesis; chorismate from D-erythrose 4-phosphate and phosphoenolpyruvate: step 7/7. Its function is as follows. Catalyzes the anti-1,4-elimination of the C-3 phosphate and the C-6 proR hydrogen from 5-enolpyruvylshikimate-3-phosphate (EPSP) to yield chorismate, which is the branch point compound that serves as the starting substrate for the three terminal pathways of aromatic amino acid biosynthesis. This reaction introduces a second double bond into the aromatic ring system. The chain is Chorismate synthase from Afipia carboxidovorans (strain ATCC 49405 / DSM 1227 / KCTC 32145 / OM5) (Oligotropha carboxidovorans).